A 316-amino-acid chain; its full sequence is Taste receptor type 2 member 3 (316 aa).

Over 1–7 the chain is Extracellular; it reads MFGFIEG. The chain crosses the membrane as a helical span at residues 8 to 28; sequence VFLVLTITEFILGNLVNGFIV. The Cytoplasmic portion of the chain corresponds to 29 to 50; that stretch reads SINSSYWFKSKKISLSNFIITS. The helical transmembrane segment at 51–71 threads the bilayer; it reads LALFRIFLLWIIFIDSLIIVF. The Extracellular portion of the chain corresponds to 72-86; the sequence is SYQTHDSGIMMQLID. The helical transmembrane segment at 87 to 107 threads the bilayer; sequence VFWTFTNHFSIWLISCLSVFY. Residues 108–128 are Cytoplasmic-facing; the sequence is CLKIASFSHPSFLWLKWRASR. Residues 129-149 traverse the membrane as a helical segment; it reads VVVGMLWGALLLSCVSTMSLM. Residues 150–186 are Extracellular-facing; it reads NEFKIYSALTRSKDTPNMTEYIRLKRQEYNLMHVLGN. N166 carries an N-linked (GlcNAc...) asparagine glycan. A helical membrane pass occupies residues 187–207; that stretch reads LWKIPSLIVSLVAYLLLLLSL. The Cytoplasmic segment spans residues 208–234; the sequence is GKHTQQMQQYSIDSRDQSAEAHKRAMR. The chain crosses the membrane as a helical span at residues 235-255; the sequence is IISSFLLFFLFYFLSFMILSS. The Extracellular segment spans residues 256–266; that stretch reads SRFLPETRIAR. The helical transmembrane segment at 267–287 threads the bilayer; sequence IIGVVISMSYLVGDSFILIVC. Over 288–316 the chain is Cytoplasmic; sequence NNKLKHTFVAMLPCECGHLKPGSKGPSAS.

It belongs to the G-protein coupled receptor T2R family.

It is found in the membrane. Its function is as follows. Gustducin-coupled receptor implicated in the perception of bitter compounds in the oral cavity and the gastrointestinal tract. Signals through PLCB2 and the calcium-regulated cation channel TRPM5. The polypeptide is Taste receptor type 2 member 3 (Tas2r3) (Mus musculus (Mouse)).